Reading from the N-terminus, the 452-residue chain is Phosphatidylinositol N-acetylglucosaminyltransferase GPI3 subunit (452 aa).

A helical membrane pass occupies residues 407-427 (LYLLCGIVEYMLFFLLEWLYP).

This sequence belongs to the glycosyltransferase group 1 family. Component of the phosphatidylinositol N-acetylglucosaminyltransferase complex composed of at least GPI1, GPI2, GPI3, GPI15, GPI19 and ERI1.

It is found in the endoplasmic reticulum membrane. It carries out the reaction a 1,2-diacyl-sn-glycero-3-phospho-(1D-myo-inositol) + UDP-N-acetyl-alpha-D-glucosamine = a 6-(N-acetyl-alpha-D-glucosaminyl)-1-(1,2-diacyl-sn-glycero-3-phospho)-1D-myo-inositol + UDP + H(+). Its pathway is glycolipid biosynthesis; glycosylphosphatidylinositol-anchor biosynthesis. Its activity is regulated as follows. Inhibited by Ras, probably via the interaction between RAS2 and ERI1. In terms of biological role, catalytic subunit in the complex catalyzing the transfer of N-acetylglucosamine from UDP-N-acetylglucosamine to phosphatidylinositol, the first step of GPI biosynthesis. This Saccharomyces cerevisiae (strain RM11-1a) (Baker's yeast) protein is Phosphatidylinositol N-acetylglucosaminyltransferase GPI3 subunit (SPT14).